The chain runs to 201 residues: Large ribosomal subunit protein bL25 (201 aa).

It belongs to the bacterial ribosomal protein bL25 family. CTC subfamily. As to quaternary structure, part of the 50S ribosomal subunit; part of the 5S rRNA/L5/L18/L25 subcomplex. Contacts the 5S rRNA. Binds to the 5S rRNA independently of L5 and L18.

This is one of the proteins that binds to the 5S RNA in the ribosome where it forms part of the central protuberance. This Akkermansia muciniphila (strain ATCC BAA-835 / DSM 22959 / JCM 33894 / BCRC 81048 / CCUG 64013 / CIP 107961 / Muc) protein is Large ribosomal subunit protein bL25.